A 326-amino-acid polypeptide reads, in one-letter code: Ig gamma-1 chain C region (326 aa).

Positions 1 to 97 are CH1; sequence AETTAPSVYP…ASSTKVDKKI (97 aa). An intrachain disulfide couples C27 to C82. The hinge stretch occupies residues 98–112; it reads VPRNCGGDCKPCICT. The tract at residues 113 to 219 is CH2; sequence GSEVSSVFIF…PIEKTISKPE (107 aa). Cystine bridges form between C140/C200 and C246/C304. Residue N176 is glycosylated (N-linked (GlcNAc...) asparagine). Positions 220 to 326 are CH3; it reads GRTQVPHVYT…EKSLSHSPGK (107 aa).

The chain is Ig gamma-1 chain C region from Rattus norvegicus (Rat).